The chain runs to 212 residues: ATP phosphoribosyltransferase (212 aa).

Belongs to the ATP phosphoribosyltransferase family. Short subfamily. Heteromultimer composed of HisG and HisZ subunits.

Its subcellular location is the cytoplasm. The catalysed reaction is 1-(5-phospho-beta-D-ribosyl)-ATP + diphosphate = 5-phospho-alpha-D-ribose 1-diphosphate + ATP. It participates in amino-acid biosynthesis; L-histidine biosynthesis; L-histidine from 5-phospho-alpha-D-ribose 1-diphosphate: step 1/9. Catalyzes the condensation of ATP and 5-phosphoribose 1-diphosphate to form N'-(5'-phosphoribosyl)-ATP (PR-ATP). Has a crucial role in the pathway because the rate of histidine biosynthesis seems to be controlled primarily by regulation of HisG enzymatic activity. In Prochlorococcus marinus (strain MIT 9301), this protein is ATP phosphoribosyltransferase.